A 353-amino-acid chain; its full sequence is Purine nucleoside phosphorylase (353 aa).

Positions 1 to 16 (MSKFSYLQNGKASTNG) are enriched in polar residues. The segment at 1 to 42 (MSKFSYLQNGKASTNGVPHANGHHQQHQNGHSNGVARNGGTA) is disordered. Phosphate-binding positions include S98, H129, 149–151 (RFH), and A181. An a purine D-ribonucleoside-binding site is contributed by E266. Residue S285 coordinates phosphate. N308 serves as a coordination point for a purine D-ribonucleoside.

This sequence belongs to the PNP/MTAP phosphorylase family. In terms of assembly, homotrimer.

It carries out the reaction inosine + phosphate = alpha-D-ribose 1-phosphate + hypoxanthine. The enzyme catalyses guanosine + phosphate = alpha-D-ribose 1-phosphate + guanine. It catalyses the reaction 2'-deoxyguanosine + phosphate = 2-deoxy-alpha-D-ribose 1-phosphate + guanine. The catalysed reaction is 2'-deoxyinosine + phosphate = 2-deoxy-alpha-D-ribose 1-phosphate + hypoxanthine. It functions in the pathway purine metabolism; purine nucleoside salvage. Its activity is regulated as follows. Inhibited by 5'-deaza-1'-aza-2c-deoxy-1'-(9-methylene) immucillin-H (DADMe-ImmH). Its function is as follows. As part of the purine salvage pathway, catalyzes the phosphorolytic breakdown of the N-glycosidic bond in the beta-(deoxy)ribonucleoside molecules, with the formation of the corresponding free purine bases and pentose-1-phosphate. Preferentially acts on 2'-deoxyinosine and inosine, and to a lesser extent on 2'-deoxyguanosine and guanosine. Has no activity towards adenosine or 2'-deoxyadenosine. In Anopheles gambiae (African malaria mosquito), this protein is Purine nucleoside phosphorylase.